A 201-amino-acid polypeptide reads, in one-letter code: Cytochrome c oxidase assembly protein CtaG (201 aa).

Over 1–13 (MTDQGENEKKQRR) the chain is Cytoplasmic. Residues 14 to 36 (SNATIAVACLSFFVCMIGAAYAS) traverse the membrane as a helical; Signal-anchor for type II membrane protein segment. The Periplasmic portion of the chain corresponds to 37 to 201 (VPLYRIFCQV…KAVGSTRNGG (165 aa)).

The protein belongs to the COX11/CtaG family.

It localises to the cell inner membrane. In terms of biological role, exerts its effect at some terminal stage of cytochrome c oxidase synthesis, probably by being involved in the insertion of the copper B into subunit I. In Brucella ovis (strain ATCC 25840 / 63/290 / NCTC 10512), this protein is Cytochrome c oxidase assembly protein CtaG.